The following is a 316-amino-acid chain: MKVLWVALVVALLAGCQADMEGELGSEEPLPPEQPRGQDSQPWEQVLGRLWDYLRWVQTLSDQVQEELLNTQVIQELTVLMEETMKEVKAYREELEGQLAPMAQETQARVSKELQAAQARLGSDMEDLRNRLAQYRSEVQAMLGQSTEELRARMASHLRKLRKRLLRDADDLKKRLAVYQAGASEGAERSVSAIRERLRPLVEQSQSRAATLSTQVGQPLLDRAEAWRQKLHGRLEEVGVRAQDRLDKMRQQLEEVRSKVEEQGSQIRLQAEAFQARLRSWFEPLVEDMQRQWAGLVEKVQLALHLSPTSPPSENH.

An N-terminal signal peptide occupies residues 1–18; it reads MKVLWVALVVALLAGCQA. A run of 8 repeats spans residues 79 to 100, 101 to 122, 123 to 144, 145 to 166, 167 to 188, 189 to 210, 211 to 232, and 233 to 254. Residues 79–254 form an 8 X 22 AA approximate tandem repeats region; the sequence is VLMEETMKEV…RLDKMRQQLE (176 aa). Methionine sulfoxide is present on M142. A Phosphoserine modification is found at S146. The tract at residues 157 to 167 is LDL and other lipoprotein receptors binding; the sequence is HLRKLRKRLLR. 161–164 contributes to the heparin binding site; the sequence is LRKR. The segment at 209-289 is lipid-binding and lipoprotein association; sequence AATLSTQVGQ…SWFEPLVEDM (81 aa). 228 to 235 is a binding site for heparin; sequence RQKLHGRL. The segment at 265–316 is homooligomerization; sequence SQIRLQAEAFQARLRSWFEPLVEDMQRQWAGLVEKVQLALHLSPTSPPSENH. A specificity for association with VLDL region spans residues 277–289; it reads RLRSWFEPLVEDM.

It belongs to the apolipoprotein A1/A4/E family. As to quaternary structure, homotetramer. May interact with ABCA1; functionally associated with ABCA1 in the biogenesis of HDLs. May interact with APP/A4 amyloid-beta peptide; the interaction is extremely stable in vitro but its physiological significance is unclear. May interact with MAPT. May interact with MAP2. In the cerebrospinal fluid, interacts with secreted SORL1. Interacts with PMEL; this allows the loading of PMEL luminal fragment on ILVs to induce fibril nucleation. APOE exists as multiple glycosylated and sialylated glycoforms within cells and in plasma. The extent of glycosylation and sialylation are tissue and context specific. Post-translationally, glycated in plasma VLDL. In terms of processing, phosphorylated by FAM20C in the extracellular medium.

It is found in the secreted. The protein resides in the extracellular space. The protein localises to the extracellular matrix. Its subcellular location is the extracellular vesicle. It localises to the endosome. It is found in the multivesicular body. APOE is an apolipoprotein, a protein associating with lipid particles, that mainly functions in lipoprotein-mediated lipid transport between organs via the plasma and interstitial fluids. APOE is a core component of plasma lipoproteins and is involved in their production, conversion and clearance. Apolipoproteins are amphipathic molecules that interact both with lipids of the lipoprotein particle core and the aqueous environment of the plasma. As such, APOE associates with chylomicrons, chylomicron remnants, very low density lipoproteins (VLDL) and intermediate density lipoproteins (IDL) but shows a preferential binding to high-density lipoproteins (HDL). It also binds a wide range of cellular receptors including the LDL receptor/LDLR and the very low-density lipoprotein receptor/VLDLR that mediate the cellular uptake of the APOE-containing lipoprotein particles. Finally, APOE also has a heparin-binding activity and binds heparan-sulfate proteoglycans on the surface of cells, a property that supports the capture and the receptor-mediated uptake of APOE-containing lipoproteins by cells. The polypeptide is Apolipoprotein E (APOE) (Ovis aries (Sheep)).